A 370-amino-acid chain; its full sequence is DNA replication and repair protein RecF (370 aa).

30-37 provides a ligand contact to ATP; it reads GENAQGKT.

The protein belongs to the RecF family. As to quaternary structure, recruited to foci following DNA damage; probably interacts with RecO.

Its subcellular location is the cytoplasm. It localises to the nucleoid. Functionally, the RecF protein is involved in DNA metabolism; it is required for DNA replication and normal SOS inducibility. RecF binds preferentially to single-stranded, linear DNA. It also seems to bind ATP. Is recruited to repair centers, foci that are the site of double-strand DNA break(s) after RecN and RecO; recruitment may depend on RecO. A positive modulator of RecA. The sequence is that of DNA replication and repair protein RecF from Bacillus subtilis (strain 168).